A 171-amino-acid chain; its full sequence is Large ribosomal subunit protein uL10 (171 aa).

This sequence belongs to the universal ribosomal protein uL10 family. Part of the ribosomal stalk of the 50S ribosomal subunit. The N-terminus interacts with L11 and the large rRNA to form the base of the stalk. The C-terminus forms an elongated spine to which L12 dimers bind in a sequential fashion forming a multimeric L10(L12)X complex.

Forms part of the ribosomal stalk, playing a central role in the interaction of the ribosome with GTP-bound translation factors. This chain is Large ribosomal subunit protein uL10, found in Paracoccus denitrificans (strain Pd 1222).